Here is a 451-residue protein sequence, read N- to C-terminus: ADP-specific phosphofructokinase (451 aa).

An ADPK domain is found at 1 to 450 (MSVPQDVSIF…FITYVNYLKR (450 aa)). Positions 261, 291, and 434 each coordinate Mg(2+). Aspartate 434 (proton acceptor) is an active-site residue.

Belongs to the carbohydrate kinase PfkC family. Mg(2+) serves as cofactor.

It localises to the cytoplasm. The enzyme catalyses beta-D-fructose 6-phosphate + ADP = beta-D-fructose 1,6-bisphosphate + AMP + H(+). It participates in carbohydrate degradation; glycolysis. Catalyzes the phosphorylation of fructose 6-phosphate to fructose 1,6-bisphosphate using ADP as the phosphate donor. The polypeptide is ADP-specific phosphofructokinase (Pyrococcus abyssi (strain GE5 / Orsay)).